The sequence spans 270 residues: MEIHRLNSYTSVDYLCNSSNNVYILLGDTDEFINKRIILLMNNIELYYVYEISVNDEDELYHSFITSNVVCPIKQRINLMLYKEYKKVIGSCVINNEGNIKMYSQPDKLHVYVLCYRCNGDIKTITMIKCHQLLKPEKEIVIDGYQVNDSSFFYTSPNLIKQINMDKSDLFYKNILLRKEINCLIRKQESSNLYCILNKHIVSLSDTDIWKVIISDELFDSSDIEKLVKFDYDRDKFHAFVRAWYSGQLSNCKEENETIKTVYEMIEKRI.

Belongs to the chordopoxvirinae D3 family.

It localises to the virion. Late protein which is part of a large complex required for early virion morphogenesis. This complex participates in the formation of virosomes and the incorporation of virosomal contents into nascent immature virions. This Vertebrata (FPV) protein is 27 kDa core protein.